Here is a 172-residue protein sequence, read N- to C-terminus: Shikimate kinase (172 aa).

11 to 16 (GAGKST) serves as a coordination point for ATP. Ser-15 is a binding site for Mg(2+). 3 residues coordinate substrate: Asp-33, Arg-57, and Gly-79. Residue Arg-117 participates in ATP binding. Position 136 (Arg-136) interacts with substrate. Arg-153 is a binding site for ATP.

This sequence belongs to the shikimate kinase family. Monomer. Requires Mg(2+) as cofactor.

It is found in the cytoplasm. It carries out the reaction shikimate + ATP = 3-phosphoshikimate + ADP + H(+). It participates in metabolic intermediate biosynthesis; chorismate biosynthesis; chorismate from D-erythrose 4-phosphate and phosphoenolpyruvate: step 5/7. Catalyzes the specific phosphorylation of the 3-hydroxyl group of shikimic acid using ATP as a cosubstrate. This chain is Shikimate kinase, found in Pseudomonas syringae pv. tomato (strain ATCC BAA-871 / DC3000).